The following is a 458-amino-acid chain: Phosphoglucosamine mutase (458 aa).

S100 functions as the Phosphoserine intermediate in the catalytic mechanism. Residues S100, D239, D241, and D243 each contribute to the Mg(2+) site. A Phosphoserine modification is found at S100.

Belongs to the phosphohexose mutase family. It depends on Mg(2+) as a cofactor. Post-translationally, activated by phosphorylation.

The enzyme catalyses alpha-D-glucosamine 1-phosphate = D-glucosamine 6-phosphate. Its function is as follows. Catalyzes the conversion of glucosamine-6-phosphate to glucosamine-1-phosphate. This chain is Phosphoglucosamine mutase, found in Dictyoglomus thermophilum (strain ATCC 35947 / DSM 3960 / H-6-12).